Reading from the N-terminus, the 324-residue chain is Serine carboxypeptidase II-1 (324 aa).

N-linked (GlcNAc...) asparagine glycosylation occurs at Asn10. Residue Ser41 is part of the active site. Cystine bridges form between Cys109–Cys121 and Cys145–Cys170. The propeptide at 150–162 (LHRRRLIKGRRPW) is linker peptide. A glycan (N-linked (GlcNAc...) asparagine) is linked at Asn191. Active-site residues include Asp239 and His291.

Belongs to the peptidase S10 family. In terms of assembly, carboxypeptidase II is a dimer, where each monomer is composed of two chains linked by a disulfide bond. Post-translationally, the linker peptide is endoproteolytically excised during enzyme maturation.

It catalyses the reaction Preferential release of a C-terminal arginine or lysine residue.. In Hordeum vulgare (Barley), this protein is Serine carboxypeptidase II-1 (CXP;2-1).